The primary structure comprises 320 residues: Cytochrome f (320 aa).

Residues 1-35 form the signal peptide; it reads MHTKNLFYSRTQQITQYLSALLMMVILTRTSISSA. Residues Y36, C56, C59, and H60 each contribute to the heme site. The helical transmembrane segment at 286 to 306 threads the bilayer; that stretch reads VQVLLFFFASIILAQIFLVLK.

Belongs to the cytochrome f family. As to quaternary structure, the 4 large subunits of the cytochrome b6-f complex are cytochrome b6, subunit IV (17 kDa polypeptide, petD), cytochrome f and the Rieske protein, while the 4 small subunits are PetG, PetL, PetM and PetN. The complex functions as a dimer. Heme is required as a cofactor.

Its subcellular location is the plastid thylakoid membrane. Its function is as follows. Component of the cytochrome b6-f complex, which mediates electron transfer between photosystem II (PSII) and photosystem I (PSI), cyclic electron flow around PSI, and state transitions. The protein is Cytochrome f of Cuscuta gronovii (Common dodder).